The following is a 378-amino-acid chain: Mannitol-1-phosphate 5-dehydrogenase (378 aa).

Residue 4–15 (SVHFGAGNIGRG) coordinates NAD(+).

This sequence belongs to the mannitol dehydrogenase family.

It catalyses the reaction D-mannitol 1-phosphate + NAD(+) = beta-D-fructose 6-phosphate + NADH + H(+). The chain is Mannitol-1-phosphate 5-dehydrogenase from Streptococcus pneumoniae serotype 4 (strain ATCC BAA-334 / TIGR4).